Reading from the N-terminus, the 394-residue chain is L-lactate dehydrogenase (394 aa).

In terms of domain architecture, FMN hydroxy acid dehydrogenase spans 1–380; sequence MIISAASDYR…SRDSLVQNAE (380 aa). Residue tyrosine 24 coordinates substrate. The FMN site is built by serine 106 and glutamine 127. Residue tyrosine 129 coordinates substrate. An FMN-binding site is contributed by threonine 155. Arginine 164 provides a ligand contact to substrate. Residue lysine 251 coordinates FMN. Histidine 275 (proton acceptor) is an active-site residue. Substrate is bound at residue arginine 278. Position 306–330 (306–330) interacts with FMN; sequence DSGIRNGLDVVRMIALGADSVLLGR.

This sequence belongs to the FMN-dependent alpha-hydroxy acid dehydrogenase family. FMN serves as cofactor.

It localises to the cell inner membrane. The enzyme catalyses (S)-lactate + A = pyruvate + AH2. Its function is as follows. Catalyzes the conversion of L-lactate to pyruvate. Is coupled to the respiratory chain. The chain is L-lactate dehydrogenase from Klebsiella pneumoniae (strain 342).